The chain runs to 267 residues: NLP effector protein 6 (267 aa).

The N-terminal stretch at 1-35 (MRTTSPYSHCSHVEMNAGAFVTMLLVALSVCVAAA) is a signal peptide. Asparagine 114 carries an N-linked (GlcNAc...) asparagine glycan. A Conserved undecapeptide motif motif is present at residues 117–127 (AIMYAWYFPKR). The Conserved heptapeptide motif signature appears at 134-140 (IQRHDWK). Asparagine 192 carries N-linked (GlcNAc...) asparagine glycosylation.

It belongs to the Necrosis inducing protein (NPP1) family.

The protein localises to the secreted. Functionally, probable secreted effector that may act as a pathogen-associated molecular pattern (PAMP) recognized by the plant immune system. This Plasmopara viticola (Downy mildew of grapevine) protein is NLP effector protein 6.